Consider the following 410-residue polypeptide: Structural protein ORF142 (410 aa).

2 disordered regions span residues 1–24 and 156–197; these read MNQN…HVDT and PTST…VNIS. The segment covering 161–188 has biased composition (acidic residues); that stretch reads DDNDNENRSDDDDDDDDYRNDREEVEDS.

It is found in the virion. This is Structural protein ORF142 from Trichoplusia ni ascovirus 2c (TnAV-2c).